We begin with the raw amino-acid sequence, 191 residues long: MARGPAGKNRGVSKISKWYKADDEATPFHRRQLKKATATKLRNDIAPGTVLILLAGRFRGKRVVFLKQLKSGLLLVTGPYKVNGVPLKRVNQAYTLSTSTKVDLTGVNTAKFEDDYFGREKARKNHKNLFKAELTEEQKKKETERKNARKQDQQAVDTPLLAAVKKVEFLKNYLASKFTLNNNDRPHEMKF.

Belongs to the eukaryotic ribosomal protein eL6 family.

This is Large ribosomal subunit protein eL6 (RPL6) from Tetrahymena thermophila (strain SB210).